The primary structure comprises 157 residues: Ribosomal RNA large subunit methyltransferase H (157 aa).

Residues Leu73, Gly105, and 124 to 129 (MSKMTF) contribute to the S-adenosyl-L-methionine site.

The protein belongs to the RNA methyltransferase RlmH family. As to quaternary structure, homodimer.

It is found in the cytoplasm. It catalyses the reaction pseudouridine(1915) in 23S rRNA + S-adenosyl-L-methionine = N(3)-methylpseudouridine(1915) in 23S rRNA + S-adenosyl-L-homocysteine + H(+). Functionally, specifically methylates the pseudouridine at position 1915 (m3Psi1915) in 23S rRNA. The sequence is that of Ribosomal RNA large subunit methyltransferase H from Bacteroides thetaiotaomicron (strain ATCC 29148 / DSM 2079 / JCM 5827 / CCUG 10774 / NCTC 10582 / VPI-5482 / E50).